A 207-amino-acid polypeptide reads, in one-letter code: N-(5'-phosphoribosyl)anthranilate isomerase (207 aa).

Belongs to the TrpF family.

The catalysed reaction is N-(5-phospho-beta-D-ribosyl)anthranilate = 1-(2-carboxyphenylamino)-1-deoxy-D-ribulose 5-phosphate. Its pathway is amino-acid biosynthesis; L-tryptophan biosynthesis; L-tryptophan from chorismate: step 3/5. This Legionella pneumophila (strain Lens) protein is N-(5'-phosphoribosyl)anthranilate isomerase.